A 768-amino-acid chain; its full sequence is DNA replication licensing factor MCM3 homolog 1 (768 aa).

In terms of domain architecture, MCM spans 290-497 (TFDLLGNSLA…IDRQISEHVA (208 aa)). An ATP-binding site is contributed by 340-347 (GDPSVAKS). The short motif at 472–475 (SRFD) is the Arginine finger element. A disordered region spans residues 662–687 (MKQQAEHDAGATGGTVDGHGSSGNDP). The span at 672–682 (ATGGTVDGHGS) shows a compositional bias: gly residues.

It belongs to the MCM family.

It localises to the nucleus. The enzyme catalyses ATP + H2O = ADP + phosphate + H(+). Functionally, acts as a factor that allows the DNA to undergo a single round of replication per cell cycle. Required for DNA replication and cell proliferation. May act as a component of the MCM complex which is the putative replicative helicase of the replication licensing system in eukaryotic cells. The polypeptide is DNA replication licensing factor MCM3 homolog 1 (ROA1) (Zea mays (Maize)).